The primary structure comprises 254 residues: Alcohol dehydrogenase (254 aa).

10 to 33 provides a ligand contact to NAD(+); sequence FVAGLGGIGLDTSREIVKSGPKNL. Ser138 provides a ligand contact to substrate. The active-site Proton acceptor is the Tyr151.

The protein belongs to the short-chain dehydrogenases/reductases (SDR) family. In terms of assembly, homodimer.

The enzyme catalyses a primary alcohol + NAD(+) = an aldehyde + NADH + H(+). It catalyses the reaction a secondary alcohol + NAD(+) = a ketone + NADH + H(+). In Drosophila nigra (Fruit fly), this protein is Alcohol dehydrogenase (Adh).